We begin with the raw amino-acid sequence, 704 residues long: Chloride intracellular channel protein 6 (704 aa).

The segment covering 1–13 (MAEAAEPEGVAPG) has biased composition (low complexity). A disordered region spans residues 1–446 (MAEAAEPEGV…EDGEASEPRA (446 aa)). The span at 39 to 48 (EGPEGSEGAE) shows a compositional bias: acidic residues. Position 44 is a phosphoserine (Ser-44). A compositionally biased stretch (basic and acidic residues) spans 67–83 (RGPEAEARGTRGAHGET). The segment covering 90 to 100 (PEGAEVPQGGE) has biased composition (low complexity). Positions 121 to 147 (PRGEAQREPEDSAAPERQEEAEQRPEV) are enriched in basic and acidic residues. Repeat copies occupy residues 157–166 (GDSVDAEGPL), 167–176 (GDNIEAEGPA), 177–186 (GDSVEAEGRV), 187–196 (GDSVDAEGPA), 197–206 (GDSVDAEGPL), 207–216 (GDNIQAEGPA), 217–226 (GDSVDAEGRV), 227–236 (GDSVDAEGPA), 237–246 (GDSVDAEGRV), 247–256 (GDSVEAGDPA), 257–266 (GDGVEAGVPA), 267–276 (GDSVEAEGPA), and 277–286 (GDSMDAEGPA). The interval 157–282 (GDSVDAEGPL…EGPAGDSMDA (126 aa)) is 13 X 10 AA tandem repeat of G-D-[SNG]-[VIM]-[DEQ]-A-[EAG]-[GDVE]-[PRG]-[LAVP]. The segment covering 295-306 (EPQQSGDGSLSP) has biased composition (polar residues). Basic and acidic residues-rich tracts occupy residues 350–360 (ARADAGEDRVG) and 371–385 (EERR…REEE). A phosphoserine mark is found at Ser-397 and Ser-442. A compositionally biased stretch (basic and acidic residues) spans 434–446 (GRREDGEASEPRA). Positions 487-490 (CPFS) match the G-site motif. Residues 489-509 (FSQRLFMILWLKGVIFNVTTV) form a helical membrane-spanning segment. The region spanning 556-704 (YPKLGTQHPE…AYSDVAKRMK (149 aa)) is the GST C-terminal domain.

This sequence belongs to the chloride channel CLIC family. As to quaternary structure, monomer (soluble state). Interacts with dopamine receptors DRD2, DRD3 and DRD4. In terms of processing, phosphorylated. Expressed in brain, placenta, pancreas, liver, lung, heart, kidney, liver, spleen, soleus muscle, and brown fat.

The protein resides in the cytoplasm. It localises to the cell membrane. It carries out the reaction chloride(in) = chloride(out). Channel activity is redox- and pH-regulated. Inhibited by IAA-94. In the soluble state, catalyzes glutaredoxin-like thiol disulfide exchange reactions with reduced glutathione as electron donor. Can insert into membranes and form voltage-dependent chloride-selective channels. The channel opens upon membrane depolarization at positive voltages and closes at negative membrane voltages. May play a critical role in water-secreting cells, possibly through the regulation of chloride ion transport. The chain is Chloride intracellular channel protein 6 from Homo sapiens (Human).